We begin with the raw amino-acid sequence, 481 residues long: Glutamate--cysteine ligase (481 aa).

It belongs to the glutamate--cysteine ligase type 1 family. Type 1 subfamily.

The enzyme catalyses L-cysteine + L-glutamate + ATP = gamma-L-glutamyl-L-cysteine + ADP + phosphate + H(+). It functions in the pathway sulfur metabolism; glutathione biosynthesis; glutathione from L-cysteine and L-glutamate: step 1/2. This chain is Glutamate--cysteine ligase, found in Clostridium acetobutylicum (strain ATCC 824 / DSM 792 / JCM 1419 / IAM 19013 / LMG 5710 / NBRC 13948 / NRRL B-527 / VKM B-1787 / 2291 / W).